Consider the following 314-residue polypeptide: 4-hydroxy-3-methylbut-2-enyl diphosphate reductase (314 aa).

[4Fe-4S] cluster is bound at residue Cys-12. (2E)-4-hydroxy-3-methylbut-2-enyl diphosphate is bound by residues His-43 and His-81. 2 residues coordinate dimethylallyl diphosphate: His-43 and His-81. The isopentenyl diphosphate site is built by His-43 and His-81. Cys-103 contacts [4Fe-4S] cluster. Position 131 (His-131) interacts with (2E)-4-hydroxy-3-methylbut-2-enyl diphosphate. His-131 is a binding site for dimethylallyl diphosphate. His-131 is an isopentenyl diphosphate binding site. The active-site Proton donor is Glu-133. Residue Thr-170 coordinates (2E)-4-hydroxy-3-methylbut-2-enyl diphosphate. Cys-198 contacts [4Fe-4S] cluster. Positions 226, 228, and 271 each coordinate (2E)-4-hydroxy-3-methylbut-2-enyl diphosphate. Dimethylallyl diphosphate-binding residues include Ser-226, Asn-228, and Ser-271. 3 residues coordinate isopentenyl diphosphate: Ser-226, Asn-228, and Ser-271.

This sequence belongs to the IspH family. The cofactor is [4Fe-4S] cluster.

The catalysed reaction is isopentenyl diphosphate + 2 oxidized [2Fe-2S]-[ferredoxin] + H2O = (2E)-4-hydroxy-3-methylbut-2-enyl diphosphate + 2 reduced [2Fe-2S]-[ferredoxin] + 2 H(+). It carries out the reaction dimethylallyl diphosphate + 2 oxidized [2Fe-2S]-[ferredoxin] + H2O = (2E)-4-hydroxy-3-methylbut-2-enyl diphosphate + 2 reduced [2Fe-2S]-[ferredoxin] + 2 H(+). The protein operates within isoprenoid biosynthesis; dimethylallyl diphosphate biosynthesis; dimethylallyl diphosphate from (2E)-4-hydroxy-3-methylbutenyl diphosphate: step 1/1. It participates in isoprenoid biosynthesis; isopentenyl diphosphate biosynthesis via DXP pathway; isopentenyl diphosphate from 1-deoxy-D-xylulose 5-phosphate: step 6/6. In terms of biological role, catalyzes the conversion of 1-hydroxy-2-methyl-2-(E)-butenyl 4-diphosphate (HMBPP) into a mixture of isopentenyl diphosphate (IPP) and dimethylallyl diphosphate (DMAPP). Acts in the terminal step of the DOXP/MEP pathway for isoprenoid precursor biosynthesis. This Bacillus licheniformis (strain ATCC 14580 / DSM 13 / JCM 2505 / CCUG 7422 / NBRC 12200 / NCIMB 9375 / NCTC 10341 / NRRL NRS-1264 / Gibson 46) protein is 4-hydroxy-3-methylbut-2-enyl diphosphate reductase.